The primary structure comprises 222 residues: Uracil-DNA glycosylase (222 aa).

Asp-61 acts as the Proton acceptor in catalysis.

This sequence belongs to the uracil-DNA glycosylase (UDG) superfamily. UNG family.

The protein localises to the cytoplasm. It catalyses the reaction Hydrolyzes single-stranded DNA or mismatched double-stranded DNA and polynucleotides, releasing free uracil.. Functionally, excises uracil residues from the DNA which can arise as a result of misincorporation of dUMP residues by DNA polymerase or due to deamination of cytosine. In Actinobacillus succinogenes (strain ATCC 55618 / DSM 22257 / CCUG 43843 / 130Z), this protein is Uracil-DNA glycosylase.